Here is a 505-residue protein sequence, read N- to C-terminus: Protein phosphatase 1J (505 aa).

The interval methionine 1–tryptophan 103 is disordered. Residues aspartate 27–alanine 50 show a composition bias toward low complexity. 2 positions are modified to phosphoserine: serine 66 and serine 76. The PPM-type phosphatase domain occupies serine 104 to leucine 498.

It belongs to the PP2C family. Interacts with UBE2I/UBC9.

It carries out the reaction O-phospho-L-seryl-[protein] + H2O = L-seryl-[protein] + phosphate. The catalysed reaction is O-phospho-L-threonyl-[protein] + H2O = L-threonyl-[protein] + phosphate. The protein is Protein phosphatase 1J (PPM1J) of Homo sapiens (Human).